The primary structure comprises 559 residues: Glucose-6-phosphate isomerase (559 aa).

Glu363 acts as the Proton donor in catalysis. Active-site residues include His394 and Lys523.

This sequence belongs to the GPI family.

The protein resides in the cytoplasm. It carries out the reaction alpha-D-glucose 6-phosphate = beta-D-fructose 6-phosphate. It functions in the pathway carbohydrate biosynthesis; gluconeogenesis. It participates in carbohydrate degradation; glycolysis; D-glyceraldehyde 3-phosphate and glycerone phosphate from D-glucose: step 2/4. In terms of biological role, catalyzes the reversible isomerization of glucose-6-phosphate to fructose-6-phosphate. In Bartonella henselae (strain ATCC 49882 / DSM 28221 / CCUG 30454 / Houston 1) (Rochalimaea henselae), this protein is Glucose-6-phosphate isomerase.